Consider the following 281-residue polypeptide: Nucleotide-binding protein MADE_1004170 (281 aa).

Residue 8–15 (GRSGSGKS) coordinates ATP. 56-59 (DVRN) lines the GTP pocket.

Belongs to the RapZ-like family.

In terms of biological role, displays ATPase and GTPase activities. The chain is Nucleotide-binding protein MADE_1004170 from Alteromonas mediterranea (strain DSM 17117 / CIP 110805 / LMG 28347 / Deep ecotype).